We begin with the raw amino-acid sequence, 179 residues long: ATP synthase subunit delta (179 aa).

It belongs to the ATPase delta chain family. In terms of assembly, F-type ATPases have 2 components, F(1) - the catalytic core - and F(0) - the membrane proton channel. F(1) has five subunits: alpha(3), beta(3), gamma(1), delta(1), epsilon(1). F(0) has three main subunits: a(1), b(2) and c(10-14). The alpha and beta chains form an alternating ring which encloses part of the gamma chain. F(1) is attached to F(0) by a central stalk formed by the gamma and epsilon chains, while a peripheral stalk is formed by the delta and b chains.

The protein localises to the cell inner membrane. In terms of biological role, f(1)F(0) ATP synthase produces ATP from ADP in the presence of a proton or sodium gradient. F-type ATPases consist of two structural domains, F(1) containing the extramembraneous catalytic core and F(0) containing the membrane proton channel, linked together by a central stalk and a peripheral stalk. During catalysis, ATP synthesis in the catalytic domain of F(1) is coupled via a rotary mechanism of the central stalk subunits to proton translocation. This protein is part of the stalk that links CF(0) to CF(1). It either transmits conformational changes from CF(0) to CF(1) or is implicated in proton conduction. The protein is ATP synthase subunit delta of Cupriavidus pinatubonensis (strain JMP 134 / LMG 1197) (Cupriavidus necator (strain JMP 134)).